The primary structure comprises 658 residues: MERSNLFHIPCFLLLFLLFNINGVHTTFVCGDEDFSPNTSYVENLESLLPSLASNVIRERGFYNVSLDGVYALALCRKHYEVQACRRCVDRASRTLLTQCRGKTEAYHWDSENDANVSCLVRYSNIHRFGKLKLEPIGNVPHSSLDPSSNLTRISQEFAARANRTVEVASTADESSVLKYYGVSSAEFTDTPEVNMLMQCTPDLSSSDCNHCLRENVRYNQEHNWDRVGGTVARPSCYFRWDDYRFAGAFDNLERVPAPPRSPQTRQDYRVKKGRMFQPWSVVVVVFPTGINLAVFVAFVLAYRRMRRRIYTEINKNSDSDGQATLRFDLGMILIATNEFSLENKLGQGGFGSVYKGILPSGQEIAVKRLAGGSGQGELEFKNEVLLLTRLQHRNLVKLLGFCNEGNEEILVYEHVPNSSLDHFIFDEDKRWLLTWDVRYRIIEGVARGLLYLHEDSQLRIIHRDLKASNILLDAEMNPKVADFGMARLFNMDETRGETSRVVGTYGYMAPEYVRHGQFSAKSDVYSFGVMLLEMISGEKNKNFETEGLPAFAWKRWIEGELESIIDPYLNENPRNEIIKLIQIGLLCVQENAAKRPTMNSVITWLARDGTFTIPKPTEAAFVTLPLSVKPENRSMSERKDKDPFSVDEVSITVLYPR.

A signal peptide spans 1–26 (MERSNLFHIPCFLLLFLLFNINGVHT). Gnk2-homologous domains are found at residues 27 to 128 (TFVC…NIHR) and 139 to 246 (NVPH…DYRF). Topologically, residues 27-281 (TFVCGDEDFS…KKGRMFQPWS (255 aa)) are extracellular. N-linked (GlcNAc...) asparagine glycans are attached at residues Asn-38, Asn-64, Asn-116, Asn-150, and Asn-163. A helical transmembrane segment spans residues 282–302 (VVVVVFPTGINLAVFVAFVLA). The Cytoplasmic portion of the chain corresponds to 303–658 (YRRMRRRIYT…EVSITVLYPR (356 aa)). One can recognise a Protein kinase domain in the interval 340–612 (FSLENKLGQG…ITWLARDGTF (273 aa)). Residues 346–354 (LGQGGFGSV) and Lys-368 each bind ATP. Tyr-413 is modified (phosphotyrosine). Asp-465 (proton acceptor) is an active-site residue. Ser-469 bears the Phosphoserine mark. Phosphothreonine is present on Thr-505. Residue Tyr-513 is modified to Phosphotyrosine.

It belongs to the protein kinase superfamily. Ser/Thr protein kinase family. CRK subfamily. In terms of assembly, interacts with CRK45. Autophosphorylated.

The protein localises to the cell membrane. It carries out the reaction L-seryl-[protein] + ATP = O-phospho-L-seryl-[protein] + ADP + H(+). The catalysed reaction is L-threonyl-[protein] + ATP = O-phospho-L-threonyl-[protein] + ADP + H(+). In terms of biological role, forms a complex with CRK45 that may negatively control abscisic acid (ABA) and osmotic stress signal transduction. Can phosphorylate CRK45 in vitro. This is Cysteine-rich receptor-like protein kinase 36 from Arabidopsis thaliana (Mouse-ear cress).